Consider the following 209-residue polypeptide: Peptidyl-tRNA hydrolase (209 aa).

Y14 contacts tRNA. H19 acts as the Proton acceptor in catalysis. TRNA contacts are provided by Y68, N70, and N116.

This sequence belongs to the PTH family. In terms of assembly, monomer.

It localises to the cytoplasm. The catalysed reaction is an N-acyl-L-alpha-aminoacyl-tRNA + H2O = an N-acyl-L-amino acid + a tRNA + H(+). Functionally, hydrolyzes ribosome-free peptidyl-tRNAs (with 1 or more amino acids incorporated), which drop off the ribosome during protein synthesis, or as a result of ribosome stalling. In terms of biological role, catalyzes the release of premature peptidyl moieties from peptidyl-tRNA molecules trapped in stalled 50S ribosomal subunits, and thus maintains levels of free tRNAs and 50S ribosomes. This chain is Peptidyl-tRNA hydrolase, found in Phenylobacterium zucineum (strain HLK1).